Consider the following 501-residue polypeptide: Glycine betaine/proline/ectoine/pipecolic acid transporter OusA (501 aa).

Residues 1 to 38 are Cytoplasmic-facing; that stretch reads MKLKRKRVKPIALDDVTIIDDGRLRKAITAAALGNAME. Residues 39–59 traverse the membrane as a helical segment; it reads WFDFGVYGFVAYALGQVFFPG. Residues 60–66 lie on the Periplasmic side of the membrane; sequence ADPGVQM. The helical transmembrane segment at 67-87 threads the bilayer; that stretch reads IAALATFSVPFLIRPLGGVFF. Over 88 to 98 the chain is Cytoplasmic; the sequence is GALGDKYGRQK. Residues 99–119 form a helical membrane-spanning segment; it reads ILAITIIIMSISTFCIGLIPS. Over 120 to 122 the chain is Periplasmic; that stretch reads YER. Residues 123-143 traverse the membrane as a helical segment; that stretch reads IGIWAPILLLLAKMAQGFSVG. Residues 144-170 lie on the Cytoplasmic side of the membrane; it reads GEYTGASIFVAEYSPDRKRGFMGSWLD. A helical membrane pass occupies residues 171–191; it reads FGSIAGFVLGAGVVVLISTLI. Residues 192–195 are Periplasmic-facing; it reads GEQA. Residues 196-216 traverse the membrane as a helical segment; sequence FLAWGWRLPFFLALPLGLIGL. The Cytoplasmic segment spans residues 217-261; the sequence is YLRHALEETPAFRQHVEKLEQNDRDGLKAGPGVSFREIATHHWKS. A helical membrane pass occupies residues 262–282; sequence LLVCIGLVIATNVTYYMLLTY. Topologically, residues 283 to 298 are periplasmic; it reads MPSYLSHSLHYSENHG. Residues 299–319 form a helical membrane-spanning segment; it reads VLIIIAIMIGMLFVQPVMGLL. At 320–326 the chain is on the cytoplasmic side; the sequence is SDRFGRK. A helical membrane pass occupies residues 327–347; the sequence is PFVVIGSVAMFFLAVPSFMLI. Topologically, residues 348 to 350 are periplasmic; the sequence is NSD. The chain crosses the membrane as a helical span at residues 351 to 371; it reads IIGLIFLGLLMLAVILNAFTG. Over 372–391 the chain is Cytoplasmic; it reads VMASTLPALFPTHIRYSALA. Residues 392–412 traverse the membrane as a helical segment; sequence SAFNISVLIAGLTPTVAAWLV. At 413–417 the chain is on the periplasmic side; the sequence is ESSQN. A helical membrane pass occupies residues 418-438; the sequence is LYMPAYYLMVIAVIGLLTGLF. The Cytoplasmic segment spans residues 439-501; that stretch reads MKETANKPLK…LVAQHPRIND (63 aa). A coiled-coil region spans residues 461–495; it reads KEILQEHHDNIEHKIEDITQQIAELEAKRQLLVAQ.

Belongs to the major facilitator superfamily. Sugar transporter (TC 2.A.1.1) family.

The protein resides in the cell inner membrane. In terms of biological role, involved in uptake and accumulation of various osmoprotectants. Allows the uptake of glycine betaine, proline, ectoine, and pipecolic acid. May be a contributory factor in the infection progression within the host. This is Glycine betaine/proline/ectoine/pipecolic acid transporter OusA from Dickeya dadantii (strain 3937) (Erwinia chrysanthemi (strain 3937)).